The primary structure comprises 181 residues: Adenylate kinase (181 aa).

10–15 (GAGKGT) serves as a coordination point for ATP. The NMP stretch occupies residues 30–59 (STGELFRRNIEKDTKLGHEAKKYLDAGDLV). AMP-binding positions include Thr-31, Arg-36, 57 to 59 (DLV), 85 to 88 (GYPR), and Gln-92. The interval 126 to 132 (GRGRADD) is LID. Residue Arg-127 participates in ATP binding. Residues Arg-129 and Arg-140 each coordinate AMP. Gly-166 is an ATP binding site.

The protein belongs to the adenylate kinase family. Monomer.

It is found in the cytoplasm. The catalysed reaction is AMP + ATP = 2 ADP. Its pathway is purine metabolism; AMP biosynthesis via salvage pathway; AMP from ADP: step 1/1. Its function is as follows. Catalyzes the reversible transfer of the terminal phosphate group between ATP and AMP. Plays an important role in cellular energy homeostasis and in adenine nucleotide metabolism. This Mycobacterium leprae (strain Br4923) protein is Adenylate kinase.